A 284-amino-acid polypeptide reads, in one-letter code: Large ribosomal subunit protein uL2 (284 aa).

Disordered regions lie at residues glutamate 28–serine 50 and arginine 232–lysine 284. Positions arginine 36–phenylalanine 46 are enriched in basic residues. A compositionally biased stretch (basic and acidic residues) spans aspartate 240–histidine 250. The span at lysine 264–lysine 284 shows a compositional bias: basic residues.

The protein belongs to the universal ribosomal protein uL2 family. As to quaternary structure, part of the 50S ribosomal subunit. Forms a bridge to the 30S subunit in the 70S ribosome.

One of the primary rRNA binding proteins. Required for association of the 30S and 50S subunits to form the 70S ribosome, for tRNA binding and peptide bond formation. It has been suggested to have peptidyltransferase activity; this is somewhat controversial. Makes several contacts with the 16S rRNA in the 70S ribosome. The polypeptide is Large ribosomal subunit protein uL2 (Chlamydia trachomatis serovar L2 (strain ATCC VR-902B / DSM 19102 / 434/Bu)).